A 66-amino-acid polypeptide reads, in one-letter code: Large ribosomal subunit protein bL35 (66 aa).

The disordered stretch occupies residues Val22–Ile41. Basic residues predominate over residues Arg27 to Ile41.

It belongs to the bacterial ribosomal protein bL35 family.

The chain is Large ribosomal subunit protein bL35 from Rhodopseudomonas palustris (strain TIE-1).